A 292-amino-acid chain; its full sequence is Protease HtpX (292 aa).

Helical transmembrane passes span 5 to 25 (IFLF…VMSL) and 34 to 54 (SGLL…SLLL). Residue H140 coordinates Zn(2+). E141 is an active-site residue. H144 is a Zn(2+) binding site. A run of 2 helical transmembrane segments spans residues 155–175 (LLQG…GGII) and 193–213 (IIVF…AMWF). E218 serves as a coordination point for Zn(2+).

Belongs to the peptidase M48B family. Zn(2+) is required as a cofactor.

The protein resides in the cell inner membrane. The chain is Protease HtpX from Xanthomonas axonopodis pv. citri (strain 306).